We begin with the raw amino-acid sequence, 66 residues long: U1-theraphotoxin-Cg1d 1 (66 aa).

A signal peptide spans 1 to 21 (MKMSALFVIFGLALLFCNSFA). A propeptide spanning residues 22–29 (AELKATGR) is cleaved from the precursor. Disulfide bonds link cysteine 31–cysteine 46, cysteine 38–cysteine 51, and cysteine 45–cysteine 58. Residue proline 63 is modified to Proline amide.

Belongs to the neurotoxin 10 (Hwtx-1) family. 46 (Jztx-7/10/12) subfamily. Expressed by the venom gland.

It localises to the secreted. Functionally, probable ion channel inhibitor. The chain is U1-theraphotoxin-Cg1d 1 from Chilobrachys guangxiensis (Chinese earth tiger tarantula).